The primary structure comprises 133 residues: Profilin Sal k 4.0201 (133 aa).

An intrachain disulfide couples C95 to C117.

It belongs to the profilin family. Occurs in many kinds of cells as a complex with monomeric actin in a 1:1 ratio. As to expression, expressed in pollen (at protein and mRNA level).

Its subcellular location is the cytoplasm. The protein resides in the cytoskeleton. Its function is as follows. Binds to actin and affects the structure of the cytoskeleton. At high concentrations, profilin prevents the polymerization of actin, whereas it enhances it at low concentrations. In Kali turgidum (Prickly saltwort), this protein is Profilin Sal k 4.0201.